Consider the following 78-residue polypeptide: MVPNLMTDIEKLQVQVDELEMKQAFQEQTIDDLNEALTDQQFQFDKMQVQLKFLVGKVKGFQSSNMAEESEETPPPHY.

It belongs to the SlyX family.

The chain is Protein SlyX homolog from Photobacterium profundum (strain SS9).